Consider the following 614-residue polypeptide: Jacalin-related lectin 14 (614 aa).

4 Jacalin-type lectin domains span residues 27 to 169 (VQKM…YFSW), 172 to 314 (PRKM…YFTT), 317 to 462 (PTKS…YFSP), and 468 to 611 (AEKL…HVVP).

The protein belongs to the jacalin lectin family.

This is Jacalin-related lectin 14 (JAL14) from Arabidopsis thaliana (Mouse-ear cress).